The sequence spans 477 residues: Epoxyalcohol synthase CYP5164B1 (477 aa).

Residue C421 coordinates heme.

Belongs to the cytochrome P450 family. The cofactor is heme.

The catalysed reaction is (9S)-hydroperoxy-(10E,12Z)-octadecadienoate = (11S)-hydroxy-(9S,10S)-epoxy-(12Z)-octadecenoate. It catalyses the reaction (13S)-hydroperoxy-(9Z,11E)-octadecadienoate = 11-hydroxy-12,13-epoxy-(9Z)-octadecenoate. The protein operates within lipid metabolism; oxylipin biosynthesis. Its function is as follows. Cytochrome P450 epoxyalcohol synthase involved in the metabolism of oxylipins 'ectocarpins' natural products, such as hybridalactone, ecklonilactones and derivatives. Isomerizes the hydroperoxides into epoxyalcohols via epoxyallylic radical. Can use linoleic acid 9-hydroperoxide ((9S,10E,12Z)-9-hydroperoxy-10,12-octadecadienoic, 9-HPOD) as preferred substrate to produce (9S,10S,11S,12Z)-9,10-epoxy-11-hydroxy-12-octadecenoic acid and, to a lower extent, active with linoleate 13-hydroperoxide ((9Z,11E,13S)-13-hydroperoxy-9,11-octadecadienoic, 13-HPOD) to produce 11-hydroxy-12,13-epoxy-9-octadecenoic acid. No activity toward alpha-linolenic acid 9- and 13-hydroperoxides, and toward eicosapentaenoic acid 15-hydroperoxide. In Ectocarpus siliculosus (Brown alga), this protein is Epoxyalcohol synthase CYP5164B1.